Consider the following 251-residue polypeptide: ATP synthase subunit a (251 aa).

7 helical membrane passes run 29 to 49 (FTQSALYMFAAVGIIALITLV), 56 to 73 (LVPGRMQSLAEAFYEFIA), 87 to 107 (FVPLVFSLFMFVLVLNLFGMI), 117 to 137 (IIVTFMLALVVILTVVIYGFM), 159 to 181 (LIVAIEVVSFISRPISLSVRLFA), 192 to 212 (IFAGFVPALLAAGIWGILSPL), and 218 to 238 (VAITALEMLVAVLQAYVFATL).

This sequence belongs to the ATPase A chain family. As to quaternary structure, F-type ATPases have 2 components, CF(1) - the catalytic core - and CF(0) - the membrane proton channel. CF(1) has five subunits: alpha(3), beta(3), gamma(1), delta(1), epsilon(1). CF(0) has three main subunits: a(1), b(2) and c(9-12). The alpha and beta chains form an alternating ring which encloses part of the gamma chain. CF(1) is attached to CF(0) by a central stalk formed by the gamma and epsilon chains, while a peripheral stalk is formed by the delta and b chains.

The protein localises to the cell inner membrane. Key component of the proton channel; it plays a direct role in the translocation of protons across the membrane. This chain is ATP synthase subunit a, found in Methylobacterium sp. (strain 4-46).